Reading from the N-terminus, the 201-residue chain is Single-stranded DNA-binding protein DdrA (201 aa).

It belongs to the RAD52 family. In terms of assembly, the truncated form (1-160) of DdrA forms heptameric rings that can assemble into a 3-ring structure.

In terms of biological role, ssDNA-binding protein that contributes to the ionizing radiation resistance of D.deserti. Plays a role in DNA repair and genome reconstitution, in a RecA-independent process, since DdrA is essential for recovery from severe genomic fragmentation as a result of exposure to severe levels of ionizing radiation in an environment lacking nutrients. In vitro, binds to the 3'-ends of single-stranded DNA, and probably protects them from nuclease degradation. Thus, DdrA is part of a DNA end-protection system that helps to preserve genome integrity following irradiation or desiccation. The sequence is that of Single-stranded DNA-binding protein DdrA (ddrA) from Deinococcus deserti (strain DSM 17065 / CIP 109153 / LMG 22923 / VCD115).